We begin with the raw amino-acid sequence, 753 residues long: Catalase-peroxidase (753 aa).

A cross-link (tryptophyl-tyrosyl-methioninium (Trp-Tyr) (with M-269)) is located at residues 91 to 243 (WHSAGTYRIG…LGAVQMGLIY (153 aa)). Histidine 92 acts as the Proton acceptor in catalysis. A cross-link (tryptophyl-tyrosyl-methioninium (Tyr-Met) (with W-91)) is located at residues 243–269 (YVNPEGPDGNPDPLAAAHDIRETFARM). Histidine 284 is a heme b binding site.

The protein belongs to the peroxidase family. Peroxidase/catalase subfamily. Homodimer or homotetramer. It depends on heme b as a cofactor. Formation of the three residue Trp-Tyr-Met cross-link is important for the catalase, but not the peroxidase activity of the enzyme.

It carries out the reaction H2O2 + AH2 = A + 2 H2O. The catalysed reaction is 2 H2O2 = O2 + 2 H2O. Functionally, bifunctional enzyme with both catalase and broad-spectrum peroxidase activity. This is Catalase-peroxidase from Paraburkholderia xenovorans (strain LB400).